Here is a 452-residue protein sequence, read N- to C-terminus: tRNA modification GTPase MnmE (452 aa).

3 residues coordinate (6S)-5-formyl-5,6,7,8-tetrahydrofolate: Arg-23, Glu-80, and Lys-119. Positions 215–374 (GIWIALVGQP…LQQGLLEMIG (160 aa)) constitute a TrmE-type G domain. Position 225 (Asn-225) interacts with K(+). Residues 225–230 (NVGKSS), 244–250 (TEVPGTT), and 269–272 (DTAG) each bind GTP. Ser-229 provides a ligand contact to Mg(2+). Residues Thr-244, Val-246, and Thr-249 each contribute to the K(+) site. Thr-250 lines the Mg(2+) pocket. Lys-452 is a binding site for (6S)-5-formyl-5,6,7,8-tetrahydrofolate.

This sequence belongs to the TRAFAC class TrmE-Era-EngA-EngB-Septin-like GTPase superfamily. TrmE GTPase family. In terms of assembly, homodimer. Heterotetramer of two MnmE and two MnmG subunits. Requires K(+) as cofactor.

The protein localises to the cytoplasm. Exhibits a very high intrinsic GTPase hydrolysis rate. Involved in the addition of a carboxymethylaminomethyl (cmnm) group at the wobble position (U34) of certain tRNAs, forming tRNA-cmnm(5)s(2)U34. The polypeptide is tRNA modification GTPase MnmE (Nitrosospira multiformis (strain ATCC 25196 / NCIMB 11849 / C 71)).